A 267-amino-acid polypeptide reads, in one-letter code: 2-keto-3-deoxy-L-rhamnonate aldolase (267 aa).

His49 serves as the catalytic Proton acceptor. Gln151 lines the substrate pocket. Glu153 serves as a coordination point for Mg(2+). Residues Ala178 and Asp179 each coordinate substrate. Mg(2+) is bound at residue Asp179.

It belongs to the HpcH/HpaI aldolase family. KDR aldolase subfamily. In terms of assembly, homohexamer. Mg(2+) is required as a cofactor.

It catalyses the reaction 2-dehydro-3-deoxy-L-rhamnonate = (S)-lactaldehyde + pyruvate. Functionally, catalyzes the reversible retro-aldol cleavage of 2-keto-3-deoxy-L-rhamnonate (KDR) to pyruvate and lactaldehyde. This Salmonella paratyphi A (strain ATCC 9150 / SARB42) protein is 2-keto-3-deoxy-L-rhamnonate aldolase.